The chain runs to 354 residues: Deoxyribonuclease-2-beta (354 aa).

An N-terminal signal peptide occupies residues 1–22 (MTAKPLRTVLSLLFFALSGVLG). 9 N-linked (GlcNAc...) asparagine glycosylation sites follow: Asn-70, Asn-77, Asn-95, Asn-98, Asn-114, Asn-129, Asn-208, Asn-271, and Asn-319.

The protein belongs to the DNase II family. As to expression, highly expressed in the eye lens. Detected in liver, but not in the other tissues tested.

It localises to the lysosome. The catalysed reaction is Endonucleolytic cleavage to nucleoside 3'-phosphates and 3'-phosphooligonucleotide end-products.. In terms of biological role, hydrolyzes DNA under acidic conditions. Does not require divalent cations for activity. Participates in the degradation of nuclear DNA during lens cell differentiation. The sequence is that of Deoxyribonuclease-2-beta (Dnase2b) from Mus musculus (Mouse).